The primary structure comprises 197 residues: MLIGYVRVSTNDQNTDLQRNALVCAGCEQIFEDKLSGTRTDRPGLKRALKRLQKGDTLVVWKLDRLGRSMKHLISLVGELRERGINFRSLTDSIDTSSPMGRFFFHVMGALAEMERELIIERTMAGLAAARNKGRIGGRPPKLTKAEWEQAGRLLAQGIPRKQVALIYDVALSTLYKKHPAKRTHIENDDRINQIDR.

The 134-residue stretch at methionine 1 to glycine 134 folds into the Resolvase/invertase-type recombinase catalytic domain. Catalysis depends on serine 9, which acts as the O-(5'-phospho-DNA)-serine intermediate. Residues glycine 138–alanine 181 constitute a DNA-binding region (H-T-H motif).

It belongs to the site-specific recombinase resolvase family. In terms of assembly, homodimer. During inversion, two dimers associate to form a homotetramer.

The protein localises to the host cytoplasm. Its function is as follows. Performs inversion of a viral segment (G-segment) that encodes two alternate pairs of tail fiber proteins thereby modifying the host specificity of the virus. Binds as a dimer to the viral gix sites which are 34-bp palindromic sequences that flank the invertible G-segment. Catalyzes site-specific recombination in the presence of the host factor Fis. Gin dimers bound to each of the gix sites and host factor Fis bound to the enhancer come together to form the synaptic complex. Each Gin monomer introduces a nick and becomes covalently attached to the 5'-phosphate of the DNA, resulting in double-stranded staggered breaks at both recombination sites. A 180 degrees rotation of one of the two Gin dimers followed by religation of the DNA leads to the inversion of the G-segment. This Escherichia coli (Bacteriophage D108) protein is Serine recombinase gin (gin).